The chain runs to 390 residues: MVERVILIVLDSVGAGEMPDADKYGDKGSDTIGNISKAVGGLKLPDMVKMGLGNISGIKGVDKVQYPIGAFGKLKEMSKGKDTVTGHWEMSGVILEEPLNTYPNGFPKDIIDEFEKKIGRKVIGNKVASGTEIIKELGDEHIKTGCPIVYTSADSVFQVAAHEEIIPLDELYKICKVAREMLVDDRTVGRVIARPFVGKNSNYTRTSNRRDFALDPFNKTMLEYIKENKSNVMCVGKIEDIFNKKGVTEAVHIKNNMDGVDKTLEYMKTDKKGLIFTNLVDFDMLYGHRNDPKGYAKALEEFDGRINEIKTNMKDYDVLMITADHGCDPTTESTDHSREYIPFIAYGKDIKGGADIKIRDSFSDIGKTILDLLQVENNLVGKSFKDIIMK.

Positions 11, 283, 288, 324, 325, and 336 each coordinate Mn(2+).

Belongs to the phosphopentomutase family. Mn(2+) is required as a cofactor.

It localises to the cytoplasm. The enzyme catalyses 2-deoxy-alpha-D-ribose 1-phosphate = 2-deoxy-D-ribose 5-phosphate. It carries out the reaction alpha-D-ribose 1-phosphate = D-ribose 5-phosphate. It participates in carbohydrate degradation; 2-deoxy-D-ribose 1-phosphate degradation; D-glyceraldehyde 3-phosphate and acetaldehyde from 2-deoxy-alpha-D-ribose 1-phosphate: step 1/2. In terms of biological role, isomerase that catalyzes the conversion of deoxy-ribose 1-phosphate (dRib-1-P) and ribose 1-phosphate (Rib-1-P) to deoxy-ribose 5-phosphate (dRib-5-P) and ribose 5-phosphate (Rib-5-P), respectively. The chain is Phosphopentomutase from Clostridium acetobutylicum (strain ATCC 824 / DSM 792 / JCM 1419 / IAM 19013 / LMG 5710 / NBRC 13948 / NRRL B-527 / VKM B-1787 / 2291 / W).